Consider the following 37-residue polypeptide: ADLAHRQQSVNRLLYKIYSPISSAYAELKQLSTDNXD.

This sequence belongs to the tyrosinase family. Hemocyanin subfamily. Hemolymph.

Its subcellular location is the secreted. It localises to the extracellular space. In terms of biological role, hemocyanins are copper-containing oxygen carriers occurring freely dissolved in the hemolymph of many mollusks and arthropods. The polypeptide is Hemocyanin subunit B (Cancer pagurus (Rock crab)).